We begin with the raw amino-acid sequence, 173 residues long: Large ribosomal RNA subunit accumulation protein YceD (173 aa).

This sequence belongs to the DUF177 domain family.

In terms of biological role, plays a role in synthesis, processing and/or stability of 23S rRNA. This Escherichia coli O157:H7 protein is Large ribosomal RNA subunit accumulation protein YceD (yceD).